Consider the following 506-residue polypeptide: ATP synthase subunit alpha (506 aa).

Gly170 to Thr177 serves as a coordination point for ATP.

This sequence belongs to the ATPase alpha/beta chains family. F-type ATPases have 2 components, CF(1) - the catalytic core - and CF(0) - the membrane proton channel. CF(1) has five subunits: alpha(3), beta(3), gamma(1), delta(1), epsilon(1). CF(0) has four main subunits: a(1), b(1), b'(1) and c(9-12).

The protein resides in the cellular thylakoid membrane. It catalyses the reaction ATP + H2O + 4 H(+)(in) = ADP + phosphate + 5 H(+)(out). Produces ATP from ADP in the presence of a proton gradient across the membrane. The alpha chain is a regulatory subunit. This chain is ATP synthase subunit alpha, found in Synechococcus sp. (strain WH7803).